The following is a 936-amino-acid chain: Isoleucine--tRNA ligase (936 aa).

The short motif at 58 to 68 (PYANGRAHLGT) is the 'HIGH' region element. An L-isoleucyl-5'-AMP-binding site is contributed by Glu561. The 'KMSKS' region signature appears at 602–606 (KMSKS). Lys605 provides a ligand contact to ATP. Cys899, Cys902, Cys919, and Cys922 together coordinate Zn(2+).

This sequence belongs to the class-I aminoacyl-tRNA synthetase family. IleS type 1 subfamily. As to quaternary structure, monomer. The cofactor is Zn(2+).

It localises to the cytoplasm. It carries out the reaction tRNA(Ile) + L-isoleucine + ATP = L-isoleucyl-tRNA(Ile) + AMP + diphosphate. Its function is as follows. Catalyzes the attachment of isoleucine to tRNA(Ile). As IleRS can inadvertently accommodate and process structurally similar amino acids such as valine, to avoid such errors it has two additional distinct tRNA(Ile)-dependent editing activities. One activity is designated as 'pretransfer' editing and involves the hydrolysis of activated Val-AMP. The other activity is designated 'posttransfer' editing and involves deacylation of mischarged Val-tRNA(Ile). The chain is Isoleucine--tRNA ligase from Coxiella burnetii (strain RSA 331 / Henzerling II).